Consider the following 541-residue polypeptide: Membrane protein insertase YidC (541 aa).

5 helical membrane passes run 7–27 (LLFM…QVDY), 345–365 (LVQN…AVLY), 415–435 (LGGC…YWTF), 453–473 (LSAQ…MFLL), and 492–512 (FMPL…VLYW).

It belongs to the OXA1/ALB3/YidC family. Type 1 subfamily. Interacts with the Sec translocase complex via SecD. Specifically interacts with transmembrane segments of nascent integral membrane proteins during membrane integration.

Its subcellular location is the cell inner membrane. In terms of biological role, required for the insertion and/or proper folding and/or complex formation of integral membrane proteins into the membrane. Involved in integration of membrane proteins that insert both dependently and independently of the Sec translocase complex, as well as at least some lipoproteins. Aids folding of multispanning membrane proteins. This Histophilus somni (strain 2336) (Haemophilus somnus) protein is Membrane protein insertase YidC.